The chain runs to 125 residues: Holo-[acyl-carrier-protein] synthase (125 aa).

Mg(2+) is bound by residues Asp-8 and Glu-57.

The protein belongs to the P-Pant transferase superfamily. AcpS family. The cofactor is Mg(2+).

It is found in the cytoplasm. The catalysed reaction is apo-[ACP] + CoA = holo-[ACP] + adenosine 3',5'-bisphosphate + H(+). Its function is as follows. Transfers the 4'-phosphopantetheine moiety from coenzyme A to a Ser of acyl-carrier-protein. In Natranaerobius thermophilus (strain ATCC BAA-1301 / DSM 18059 / JW/NM-WN-LF), this protein is Holo-[acyl-carrier-protein] synthase.